Consider the following 687-residue polypeptide: Fimbrin-5 (687 aa).

One can recognise an EF-hand domain in the interval 7–74; the sequence is VLVSDPWLQS…KSVLDKSYPN (68 aa). 4 consecutive Calponin-homology (CH) domains span residues 122 to 239, 267 to 370, 392 to 498, and 513 to 621; these read ESEK…KIQM, LAPE…QHRN, SREE…RYTM, and EITD…YWSL. 2 actin-binding regions span residues 122-370 and 392-621; these read ESEK…QHRN and SREE…YWSL. The interval 628 to 687 is disordered; sequence ESTVSEDATDDGDANSVAGEISNLSIDGASESSPTVQDQELLTKADNDEDEVDGENNKDA. Polar residues predominate over residues 649–667; sequence SNLSIDGASESSPTVQDQE.

In terms of assembly, interacts with F-actin. As to expression, expressed in mature pollen.

It is found in the cytoplasm. The protein localises to the cytoskeleton. Cross-links actin filaments (F-actin) in a calcium independent manner. Induces the formation of actin bundles. Stabilizes and prevents F-actin depolymerization mediated by latrunculin B (LatB). This chain is Fimbrin-5, found in Arabidopsis thaliana (Mouse-ear cress).